The primary structure comprises 42 residues: Serine/threonine-protein phosphatase 5 (42 aa).

Residues 38 to 42 (QLGVM) form a required for autoinhibition region.

This sequence belongs to the PPP phosphatase family. PP-5 (PP-T) subfamily. In terms of assembly, probably forms a complex composed of chaperones HSP90 and HSP70, co-chaperones STIP1/HOP, CDC37, PPP5C, PTGES3/p23, TSC1 and client protein TSC2. Probably forms a complex composed of chaperones HSP90 and HSP70, co-chaperones CDC37, PPP5C, TSC1 and client protein TSC2, CDK4, AKT, RAF1 and NR3C1; this complex does not contain co-chaperones STIP1/HOP and PTGES3/p23. Part of a complex with HSP90/HSP90AA1 and steroid receptors. Interacts (via TPR repeats) with HSP90AA1 (via TPR repeat-binding motif) or HSPA1A/HSPA1B; the interaction is direct and activates the phosphatase activity. Dissociates from HSPA1A/HSPA1B and HSP90AA1 in response to arachidonic acid. Interacts with CPNE1 (via VWFA domain). Interacts with CDC16, CDC27. Interacts with KLHDC10 (via the 6 Kelch repeats); inhibits the phosphatase activity on MAP3K5. Interacts with ATM and ATR; both interactions are induced by DNA damage and enhance ATM and ATR kinase activity. Interacts with RAD17; reduced by DNA damage. Interacts with nuclear receptors such as NR3C1/GCR and PPARG (activated by agonist); regulates their transactivation activities. Interacts (via TPR repeats) with S100 proteins S100A1, S100A2, S100A6, S100B and S100P; the interactions are calcium-dependent, strongly activate PPP5C phosphatase activity and compete with HSP90AA1 and MAP3K5 interactions. Interacts with SMAD2 and SMAD3 but not with SMAD1; decreases SMAD3 phosphorylation and protein levels. Interacts (via TPR repeats) with CRY1 and CRY2; the interaction with CRY2 down-regulates the phosphatase activity on CSNK1E. Interacts (via TPR repeats) with the active form of RAC1, GNA12 or GNA13; these interactions activate the phosphatase activity and translocate PPP5C to the cell membrane. Interacts with FLCN. Requires Mg(2+) as cofactor. Mn(2+) serves as cofactor. Post-translationally, activated by at least two different proteolytic cleavages producing a 56 kDa and a 50 kDa form.

It is found in the nucleus. The protein resides in the cytoplasm. Its subcellular location is the cell membrane. The enzyme catalyses O-phospho-L-seryl-[protein] + H2O = L-seryl-[protein] + phosphate. The catalysed reaction is O-phospho-L-threonyl-[protein] + H2O = L-threonyl-[protein] + phosphate. Autoinhibited. In the autoinhibited state, the TPR domain interacts with the catalytic region and prevents substrate access to the catalytic pocket. Allosterically activated by various polyunsaturated fatty acids, free long-chain fatty-acids and long-chain fatty acyl-CoA esters, arachidonic acid being the most effective activator. HSP90A and probably RAC1, GNA12 and GNA13 can also release the autoinhibition by the TPR repeat. Activation by RAC1, GNA12 and GNA13 is synergistic with the one produced by fatty acids binding. Inhibited by okadaic acid. In terms of biological role, serine/threonine-protein phosphatase that dephosphorylates a myriad of proteins involved in different signaling pathways including the kinases CSNK1E, ASK1/MAP3K5, PRKDC and RAF1, the nuclear receptors NR3C1, PPARG, ESR1 and ESR2, SMAD proteins and TAU/MAPT. Implicated in wide ranging cellular processes, including apoptosis, differentiation, DNA damage response, cell survival, regulation of ion channels or circadian rhythms, in response to steroid and thyroid hormones, calcium, fatty acids, TGF-beta as well as oxidative and genotoxic stresses. Participates in the control of DNA damage response mechanisms such as checkpoint activation and DNA damage repair through, for instance, the regulation ATM/ATR-signaling and dephosphorylation of PRKDC and TP53BP1. Inhibits ASK1/MAP3K5-mediated apoptosis induced by oxidative stress. Plays a positive role in adipogenesis, mainly through the dephosphorylation and activation of PPARG transactivation function. Also dephosphorylates and inhibits the anti-adipogenic effect of NR3C1. Regulates the circadian rhythms, through the dephosphorylation and activation of CSNK1E. May modulate TGF-beta signaling pathway by the regulation of SMAD3 phosphorylation and protein expression levels. Dephosphorylates and may play a role in the regulation of TAU/MAPT. Through their dephosphorylation, may play a role in the regulation of ions channels such as KCNH2. Dephosphorylate FNIP1, disrupting interaction with HSP90AA1/Hsp90. The sequence is that of Serine/threonine-protein phosphatase 5 (PPP5C) from Oryctolagus cuniculus (Rabbit).